Here is a 122-residue protein sequence, read N- to C-terminus: Large ribosomal subunit protein uL14c (122 aa).

Belongs to the universal ribosomal protein uL14 family. In terms of assembly, part of the 50S ribosomal subunit.

The protein resides in the plastid. It localises to the chloroplast. Binds to 23S rRNA. The sequence is that of Large ribosomal subunit protein uL14c from Morus indica (Mulberry).